Consider the following 354-residue polypeptide: Dihydroorotate dehydrogenase (quinone) (354 aa).

FMN is bound by residues 61–65 (AGYDK) and A85. K65 is a binding site for substrate. Residue 110–114 (NRFGF) coordinates substrate. FMN contacts are provided by N139 and N170. N170 serves as a coordination point for substrate. The active-site Nucleophile is S173. N175 contributes to the substrate binding site. K211 and T239 together coordinate FMN. 240 to 241 (NT) is a substrate binding site. FMN contacts are provided by residues G261, G290, and 311–312 (YT).

It belongs to the dihydroorotate dehydrogenase family. Type 2 subfamily. In terms of assembly, monomer. The cofactor is FMN.

The protein resides in the cell membrane. It catalyses the reaction (S)-dihydroorotate + a quinone = orotate + a quinol. It functions in the pathway pyrimidine metabolism; UMP biosynthesis via de novo pathway; orotate from (S)-dihydroorotate (quinone route): step 1/1. In terms of biological role, catalyzes the conversion of dihydroorotate to orotate with quinone as electron acceptor. The sequence is that of Dihydroorotate dehydrogenase (quinone) from Cereibacter sphaeroides (strain KD131 / KCTC 12085) (Rhodobacter sphaeroides).